We begin with the raw amino-acid sequence, 539 residues long: Phenylacetyl-CoA ligase epaB (539 aa).

An AMP-binding site is contributed by 188–199 (RLFSSGTTGLPK). The interval 449–525 (EVEGVLRNHP…DAIPRNASGK (77 aa)) is AMP-binding.

It belongs to the ATP-dependent AMP-binding enzyme family.

The protein operates within secondary metabolite biosynthesis. In terms of biological role, phenylacetyl-CoA ligase; part of the gene cluster that mediates the biosynthesis of nigerpyrone and its derivatives carbonarone A and pestalamide A. The biosynthesis pathway begins with the polyketide assembly by epaA to form phenylacetyl triketide precursor from successive condensation of two malonyl-CoA, presumably with one phenylacetyl-CoA starter unit produced by the phenylacetyl-CoA ligase epaB. For the nigerpyrone biosynthesis, the reactive polyketide chain is released as an aldehyde through the R-domain. A nonenzymatic cyclization and dehydration may create nigerpyrone. For the biosynthesis of carbonarone A and pestalamide A, an extra methyl group is added through the C-methyltransferase domain. Several further steps involving the dehydrogenase orf1, the cytochrome P450 monooxygenase orf2 and the FAD-dependent monooxygenase orf3 are required to form a carbonarone A precursor which is converted to carbonarone A via cyclization. The O-acetyltransferase epaC could catalyze the transfer of 2-methylsuccinyl-CoA, a common intermediate in the ethylmalonyl-CoA pathway, to generate the final product pestalamide A. The sequence is that of Phenylacetyl-CoA ligase epaB from Aspergillus niger (strain ATCC MYA-4892 / CBS 513.88 / FGSC A1513).